A 333-amino-acid polypeptide reads, in one-letter code: Ketol-acid reductoisomerase (NADP(+)) (333 aa).

The KARI N-terminal Rossmann domain occupies 2–182; that stretch reads AKIFYDSDCN…GASRAGIILT (181 aa). NADP(+) contacts are provided by residues 25–28, Ser51, Ser53, and 83–86; these read FGSQ and DEKQ. His108 is a catalytic residue. Residue Gly134 participates in NADP(+) binding. The region spanning 183 to 328 is the KARI C-terminal knotted domain; that stretch reads TFKEETETDL…KELRKMMPWI (146 aa). Mg(2+) contacts are provided by Asp191, Glu195, Glu227, and Glu231. Substrate is bound at residue Ser252.

Belongs to the ketol-acid reductoisomerase family. Requires Mg(2+) as cofactor.

The enzyme catalyses (2R)-2,3-dihydroxy-3-methylbutanoate + NADP(+) = (2S)-2-acetolactate + NADPH + H(+). The catalysed reaction is (2R,3R)-2,3-dihydroxy-3-methylpentanoate + NADP(+) = (S)-2-ethyl-2-hydroxy-3-oxobutanoate + NADPH + H(+). The protein operates within amino-acid biosynthesis; L-isoleucine biosynthesis; L-isoleucine from 2-oxobutanoate: step 2/4. It functions in the pathway amino-acid biosynthesis; L-valine biosynthesis; L-valine from pyruvate: step 2/4. In terms of biological role, involved in the biosynthesis of branched-chain amino acids (BCAA). Catalyzes an alkyl-migration followed by a ketol-acid reduction of (S)-2-acetolactate (S2AL) to yield (R)-2,3-dihydroxy-isovalerate. In the isomerase reaction, S2AL is rearranged via a Mg-dependent methyl migration to produce 3-hydroxy-3-methyl-2-ketobutyrate (HMKB). In the reductase reaction, this 2-ketoacid undergoes a metal-dependent reduction by NADPH to yield (R)-2,3-dihydroxy-isovalerate. The sequence is that of Ketol-acid reductoisomerase (NADP(+)) from Caldicellulosiruptor bescii (strain ATCC BAA-1888 / DSM 6725 / KCTC 15123 / Z-1320) (Anaerocellum thermophilum).